The chain runs to 238 residues: Ribosomal RNA small subunit methyltransferase G (238 aa).

S-adenosyl-L-methionine-binding positions include Gly-79, Phe-84, 102–104, 130–131, and Arg-149; these read EAT and IE.

It belongs to the methyltransferase superfamily. RNA methyltransferase RsmG family.

It is found in the cytoplasm. Specifically methylates the N7 position of a guanine in 16S rRNA. The protein is Ribosomal RNA small subunit methyltransferase G of Chloroflexus aggregans (strain MD-66 / DSM 9485).